The primary structure comprises 245 residues: Demethylmenaquinone methyltransferase (245 aa).

Residues Thr-58, Asp-79, and 106–107 (NA) contribute to the S-adenosyl-L-methionine site.

It belongs to the class I-like SAM-binding methyltransferase superfamily. MenG/UbiE family.

The enzyme catalyses a 2-demethylmenaquinol + S-adenosyl-L-methionine = a menaquinol + S-adenosyl-L-homocysteine + H(+). It functions in the pathway quinol/quinone metabolism; menaquinone biosynthesis; menaquinol from 1,4-dihydroxy-2-naphthoate: step 2/2. Functionally, methyltransferase required for the conversion of demethylmenaquinol (DMKH2) to menaquinol (MKH2). In Halalkalibacterium halodurans (strain ATCC BAA-125 / DSM 18197 / FERM 7344 / JCM 9153 / C-125) (Bacillus halodurans), this protein is Demethylmenaquinone methyltransferase.